A 620-amino-acid chain; its full sequence is Rhamnogalacturonan endolyase YesW (620 aa).

Positions 1-37 (MRRSCLMIRRRKRMFTAVTLLVLLVMGTSVCPVKAEG) are cleaved as a signal peptide. The interval 133–152 (LDKPAGGTTPKGESYTYSAN) is disordered. Substrate is bound at residue Asn-152. Ca(2+) is bound by residues Asp-153, Asp-158, Asp-160, Asp-162, Gln-164, and Glu-166. Asp-172 is a substrate binding site. The a carbohydrate site is built by Asp-187 and Lys-207. Residues Asp-222, Asp-224, Asp-226, Lys-228, and Glu-230 each coordinate Ca(2+). A carbohydrate contacts are provided by Gly-238 and Arg-255. 16 residues coordinate Ca(2+): His-363, Asp-369, Asp-371, Asp-373, Lys-375, Glu-377, Asp-386, His-387, His-399, Asp-401, Asp-407, Asp-409, Arg-412, Gly-414, Glu-416, and Glu-422. Arg-452 is a binding site for substrate. Residues Asp-457, Asp-459, Tyr-462, Gly-464, Glu-466, Asp-496, Asp-498, Leu-500, and Glu-502 each contribute to the Ca(2+) site. 532–534 (NGT) contributes to the substrate binding site. Asp-543, Leu-545, Asp-547, Arg-549, Glu-551, Asn-592, and Ala-594 together coordinate Ca(2+). Residue Tyr-595 coordinates substrate. Asn-596 serves as a coordination point for Ca(2+).

This sequence belongs to the polysaccharide lyase 11 family. In terms of assembly, monomer. It depends on Ca(2+) as a cofactor. Mn(2+) serves as cofactor.

It is found in the secreted. It carries out the reaction Endotype eliminative cleavage of L-alpha-rhamnopyranosyl-(1-&gt;4)-alpha-D-galactopyranosyluronic acid bonds of rhamnogalacturonan I domains in ramified hairy regions of pectin leaving L-rhamnopyranose at the reducing end and 4-deoxy-4,5-unsaturated D-galactopyranosyluronic acid at the non-reducing end.. In terms of biological role, pectinolytic enzyme that degrades type I rhamnogalacturonan from plant cell walls and releases oligosaccharide products. Degrades rhamnogalacturonan, polygalacturonic acid, pectic acid and pectin. This is Rhamnogalacturonan endolyase YesW (yesW) from Bacillus subtilis (strain 168).